A 144-amino-acid chain; its full sequence is Ninjurin-2 (144 aa).

Topologically, residues 1–62 (MESDREIIHL…KSVLEQGPFS (62 aa)) are extracellular. A helix alpha1 region spans residues 27-39 (NHYATKKSVAESM). Residues 40–59 (LDVALFMSNAMRLKSVLEQG) are helix alpha2. Residues 63–94 (QYYTTLLTLISASLLLQVVIGILLVVIARLNL) form a helical membrane-spanning segment. Residues 95–98 (NEVE) lie on the Cytoplasmic side of the membrane. The chain crosses the membrane as a helical span at residues 99 to 128 (NQWRLNQLNNAATTLVFITVVINIFITAFG). Gln-105 is a binding site for cholesterol. At 129–144 (AHKTGSVAARTSSNPI) the chain is on the extracellular side.

This sequence belongs to the ninjurin family. In terms of assembly, homooligomer; in response to stimuli, homooligomerizes into filaments. In contrast to NINJ1, the filament is curved toward the intracellular space, preventing its circularization on a relatively flat membrane to mediate plasma membrane rupture: curvature is caused by cholesterol-binding at the cytoplasmic leaflet.

The protein localises to the cell membrane. Its role in unclear. In contrast to NINJ1 paralog, does not mediate plasma membrane rupture (cytolysis) downstream of necroptotic and pyroptotic programmed cell death. While it is able to oligomerize and form filaments, filaments are curved toward the intracellular space, preventing circularization to mediate plasma membrane rupture. May act as a homophilic transmembrane adhesion molecule involved in nerve regeneration. Promotes axonal growth. This is Ninjurin-2 (Ninj2) from Rattus norvegicus (Rat).